A 137-amino-acid polypeptide reads, in one-letter code: Venom allergen 4 (137 aa).

The N-terminal stretch at 1-19 is a signal peptide; it reads MKTFVLVSCLLVFTQIIYA.

The protein belongs to the ant venom allergen 2/4 family. In terms of assembly, monomer. Expressed by the venom gland.

It localises to the secreted. The protein is Venom allergen 4 of Solenopsis invicta (Red imported fire ant).